A 432-amino-acid chain; its full sequence is Adenylosuccinate synthetase (432 aa).

GTP-binding positions include 13-19 (GDEGKGK) and 41-43 (GHT). Residue D14 is the Proton acceptor of the active site. Residues D14 and G41 each coordinate Mg(2+). IMP contacts are provided by residues 14–17 (DEGK), 39–42 (NAGH), T130, R144, Q225, T240, and R304. H42 serves as the catalytic Proton donor. 300-306 (ATTGRPR) contacts substrate. GTP contacts are provided by residues R306, 332 to 334 (KLD), and 415 to 417 (STG).

This sequence belongs to the adenylosuccinate synthetase family. In terms of assembly, homodimer. Mg(2+) serves as cofactor.

It localises to the cytoplasm. The enzyme catalyses IMP + L-aspartate + GTP = N(6)-(1,2-dicarboxyethyl)-AMP + GDP + phosphate + 2 H(+). It participates in purine metabolism; AMP biosynthesis via de novo pathway; AMP from IMP: step 1/2. Functionally, plays an important role in the de novo pathway of purine nucleotide biosynthesis. Catalyzes the first committed step in the biosynthesis of AMP from IMP. This is Adenylosuccinate synthetase from Hahella chejuensis (strain KCTC 2396).